The following is a 106-amino-acid chain: Small ribosomal subunit protein uS10 (106 aa).

Belongs to the universal ribosomal protein uS10 family. As to quaternary structure, part of the 30S ribosomal subunit.

In terms of biological role, involved in the binding of tRNA to the ribosomes. The sequence is that of Small ribosomal subunit protein uS10 from Prochlorococcus marinus (strain MIT 9303).